The primary structure comprises 213 residues: Kynurenine formamidase (213 aa).

Tryptophan 18 serves as a coordination point for substrate. Zn(2+) contacts are provided by histidine 48, histidine 52, and aspartate 54. The active-site Proton donor/acceptor is histidine 58. The Zn(2+) site is built by histidine 160 and glutamate 172.

This sequence belongs to the Cyclase 1 superfamily. KynB family. As to quaternary structure, homodimer. Zn(2+) serves as cofactor.

The catalysed reaction is N-formyl-L-kynurenine + H2O = L-kynurenine + formate + H(+). Its pathway is amino-acid degradation; L-tryptophan degradation via kynurenine pathway; L-kynurenine from L-tryptophan: step 2/2. Its function is as follows. Catalyzes the hydrolysis of N-formyl-L-kynurenine to L-kynurenine, the second step in the kynurenine pathway of tryptophan degradation. The polypeptide is Kynurenine formamidase (Burkholderia cenocepacia (strain ATCC BAA-245 / DSM 16553 / LMG 16656 / NCTC 13227 / J2315 / CF5610) (Burkholderia cepacia (strain J2315))).